The primary structure comprises 284 residues: 3-methyl-2-oxobutanoate hydroxymethyltransferase (284 aa).

Residues Asp-44 and Asp-83 each coordinate Mg(2+). 3-methyl-2-oxobutanoate is bound by residues 44–45 (DS), Asp-83, and Lys-112. Glu-114 provides a ligand contact to Mg(2+). The active-site Proton acceptor is Glu-181.

This sequence belongs to the PanB family. Homodecamer; pentamer of dimers. Mg(2+) is required as a cofactor.

It is found in the cytoplasm. The enzyme catalyses 3-methyl-2-oxobutanoate + (6R)-5,10-methylene-5,6,7,8-tetrahydrofolate + H2O = 2-dehydropantoate + (6S)-5,6,7,8-tetrahydrofolate. Its pathway is cofactor biosynthesis; coenzyme A biosynthesis. Neither activated nor inhibited by coenzyme A. Functionally, catalyzes the reversible reaction in which hydroxymethyl group from 5,10-methylenetetrahydrofolate is transferred onto alpha-ketoisovalerate to form ketopantoate. This Thermococcus kodakarensis (strain ATCC BAA-918 / JCM 12380 / KOD1) (Pyrococcus kodakaraensis (strain KOD1)) protein is 3-methyl-2-oxobutanoate hydroxymethyltransferase.